The chain runs to 1478 residues: GTPase-activating protein and VPS9 domain-containing protein 1 (1478 aa).

The 239-residue stretch at 147 to 385 (SYLLQVLRYL…AAFLDVVIGG (239 aa)) folds into the Ras-GAP domain. Ser227 is subject to Phosphoserine. 2 positions are modified to phosphothreonine: Thr390 and Thr458. Tyr460 bears the Phosphotyrosine mark. Ser466 carries the post-translational modification Phosphoserine. At Thr470 the chain carries Phosphothreonine. 2 positions are modified to phosphoserine: Ser566 and Ser569. Disordered regions lie at residues 574–608 (GISE…GSNG), 739–820 (ESCS…PPSQ), and 846–874 (HYAR…LPNF). Polar residues predominate over residues 578–588 (GPSNRSNSVSS). Ser742, Ser746, and Ser757 each carry phosphoserine. The segment covering 758–777 (SRPSTPGLSVVSGISATSED) has biased composition (polar residues). Position 762 is a phosphothreonine (Thr762). Ser766 carries the post-translational modification Phosphoserine. Basic and acidic residues predominate over residues 778 to 789 (IPNKIEDLRSEC). Ser876, Ser902, Ser903, Ser908, Ser914, and Ser966 each carry phosphoserine. Basic and acidic residues predominate over residues 889–902 (QRHSYPERLVRSRS). Disordered regions lie at residues 889–1023 (QRHS…PRLS) and 1043–1064 (TSPS…DRDL). Basic and acidic residues-rich tracts occupy residues 954 to 975 (DSSR…DRNR) and 997 to 1008 (EKQEKDKDDLGP). Polar residues predominate over residues 1012-1023 (STLTDDPSPRLS). Residues Ser1019, Ser1046, Ser1096, and Ser1103 each carry the phosphoserine modification. Residues 1338–1478 (ILRDQVLHEH…EFIKTIDDRK (141 aa)) form the VPS9 domain.

This sequence belongs to the GAPVD1 family. As to quaternary structure, interacts with TRIP10/CIP4. Interacts with RAB5A. In terms of assembly, (Microbial infection) Interacts with P.falciparum (strain 3D7) CK1. As to expression, expressed in erythrocytes (at protein level).

It localises to the membrane. Its subcellular location is the endosome. In terms of biological role, acts both as a GTPase-activating protein (GAP) and a guanine nucleotide exchange factor (GEF), and participates in various processes such as endocytosis, insulin receptor internalization or LC2A4/GLUT4 trafficking. Acts as a GEF for the Ras-related protein RAB31 by exchanging bound GDP for free GTP, leading to regulate LC2A4/GLUT4 trafficking. In the absence of insulin, it maintains RAB31 in an active state and promotes a futile cycle between LC2A4/GLUT4 storage vesicles and early endosomes, retaining LC2A4/GLUT4 inside the cells. Upon insulin stimulation, it is translocated to the plasma membrane, releasing LC2A4/GLUT4 from intracellular storage vesicles. Also involved in EGFR trafficking and degradation, possibly by promoting EGFR ubiquitination and subsequent degradation by the proteasome. Has GEF activity for Rab5 and GAP activity for Ras. This Homo sapiens (Human) protein is GTPase-activating protein and VPS9 domain-containing protein 1 (GAPVD1).